The following is a 192-amino-acid chain: UPF0312 protein ECA1782 (192 aa).

The signal sequence occupies residues Met-1 to Ala-23.

The protein belongs to the UPF0312 family. Type 1 subfamily.

Its subcellular location is the periplasm. This chain is UPF0312 protein ECA1782, found in Pectobacterium atrosepticum (strain SCRI 1043 / ATCC BAA-672) (Erwinia carotovora subsp. atroseptica).